The sequence spans 335 residues: Nucleotide-binding protein CYA_0911 (335 aa).

20-27 is a binding site for ATP; the sequence is GLTGSGKT. The tract at residues 306-335 is disordered; that stretch reads ARFGPPPPAAGVEQQQVRIPLAGVPAPPHD.

It belongs to the RapZ-like family.

Its function is as follows. Displays ATPase and GTPase activities. The polypeptide is Nucleotide-binding protein CYA_0911 (Synechococcus sp. (strain JA-3-3Ab) (Cyanobacteria bacterium Yellowstone A-Prime)).